A 139-amino-acid polypeptide reads, in one-letter code: Protein COLD-REGULATED 15A, chloroplastic (139 aa).

Residues 1 to 40 constitute a chloroplast transit peptide; it reads MAMSFSGAVLTGMASSFHSGAKQSSFGAVRVGQKTQFVVV.

It belongs to the COR15 protein family. Forms homooligomers which interact with potential stromal substrates in the stroma of chloroplasts. Interacts with the galactose headgroup of the chloroplast lipid monogalactosyldiacylglycerol (MGDG).

It is found in the plastid. The protein resides in the chloroplast stroma. Functionally, exhibits cryoprotective activity toward stromal substrates (e.g. LDH and rubisco) in chloroplasts and in protoplasts and confers freezing tolerance to plants in a CBF-dependent manner. Protectant against various stresses (e.g. cold, drought and heat stress) by preventing protein aggregation (e.g. LDH) and attenuating enzyme inactivation. Influences the intrinsic curvature of the inner membrane of the chloroplast envelope, and modulates the freeze-induced lamellar-to-hexagonal II phase transitions that occur in regions where the plasma membrane is brought into close apposition with the chloroplast envelope during freeze-induced osmotic contraction. Mediates a shift in the melting curves of phospholipids-containing membranes to lower temperatures. Involved in the regulation of leaf senescence by abscisic acid (ABA) in a VNI2-dependent manner. This is Protein COLD-REGULATED 15A, chloroplastic from Arabidopsis thaliana (Mouse-ear cress).